We begin with the raw amino-acid sequence, 550 residues long: Cytochrome P450 monooxygenase hasH (550 aa).

A helical transmembrane segment spans residues 39–59; the sequence is IGVLASIVVLVTVVIGPKAVI. Cysteine 493 is a binding site for heme.

Belongs to the cytochrome P450 family. Heme serves as cofactor.

The protein localises to the membrane. Its pathway is secondary metabolite biosynthesis. Cytochrome P450 monooxygenase; part of the gene cluster that mediates the biosynthesis of hexadehydro-astechrome (HAS), a tryptophan-derived iron(III)-complex that acts as a virulence factor in infected mice. Within the pathway, hasH, with the O-methyltransferase hasC and the FAD-linked oxidoreductase hasG, convert the hasE-prenylated Trp-Ala dipeptide into an O-methylated diketopiperazine that is then released from the hasD NRPS. The HAS biosynthesis begins with the synthesis of a tethered Trp-Ala dipeptide by the NRPS hasD. The 7-dimethylallyltryptophan synthase hasE then catalyzes the prenylation of the hasD-tethered tryptophan or the resulting tethered Trp-Ala dipeptide at the C-7 position of the indole moiety. HAS biosynthesis continues via tethered intermediates with the succesive action of the cytochrome P450 monooxygenase hasH, the O-methyltransferase hasC, and the FAD-linked oxidoreductase hasG. The resulting O-methylated diketopiperazine is then released from hasD. Finally, three O-methylated diketopiperazine molecules assemble in a trimeric complex with Fe(III) to produce hexadehydro-astechrome. The protein is Cytochrome P450 monooxygenase hasH of Aspergillus fumigatus (strain CBS 144.89 / FGSC A1163 / CEA10) (Neosartorya fumigata).